Here is an 847-residue protein sequence, read N- to C-terminus: Protein translocase subunit SecA (847 aa).

ATP contacts are provided by residues Gln87, 105–109 (GEGKT), and Asp495. Residues 828 to 847 (SSNSPSDARNRPIEHDDNAV) form a disordered region. Over residues 835 to 847 (ARNRPIEHDDNAV) the composition is skewed to basic and acidic residues.

This sequence belongs to the SecA family. In terms of assembly, monomer and homodimer. Part of the essential Sec protein translocation apparatus which comprises SecA, SecYEG and auxiliary proteins SecDF. Other proteins may also be involved.

The protein resides in the cell membrane. The protein localises to the cytoplasm. It catalyses the reaction ATP + H2O + cellular proteinSide 1 = ADP + phosphate + cellular proteinSide 2.. In terms of biological role, part of the Sec protein translocase complex. Interacts with the SecYEG preprotein conducting channel. Has a central role in coupling the hydrolysis of ATP to the transfer of proteins into and across the cell membrane, serving as an ATP-driven molecular motor driving the stepwise translocation of polypeptide chains across the membrane. The sequence is that of Protein translocase subunit SecA from Tropheryma whipplei (strain TW08/27) (Whipple's bacillus).